Reading from the N-terminus, the 744-residue chain is Collagen alpha-1(VIII) chain (744 aa).

The N-terminal stretch at 1–27 (MAVQPGPPQLLQVLLTISLGSIRLIQA) is a signal peptide. Residues 29 to 117 (AYYGIKPLPP…GKEIPLASLR (89 aa)) are nonhelical region (NC2). The span at 101–110 (KEAVPKKGKE) shows a compositional bias: basic and acidic residues. Disordered stretches follow at residues 101-434 (KEAV…PGLQ) and 463-584 (EAGH…QGEY). A triple-helical region region spans residues 118–571 (GEQGPRGEPG…PGPPGPPGPP (454 aa)). The span at 128–137 (PRGPPGPPGL) shows a compositional bias: pro residues. Residues 168–190 (KPGAMGMPGAKGEIGPKGEIGPM) show a composition bias toward low complexity. Residues 203–217 (GLPGIGKPGGPGLPG) are compositionally biased toward gly residues. Positions 288 to 298 (KPGPPGEPGPQ) are enriched in pro residues. Positions 328-337 (GFPGGKGEQG) are enriched in gly residues. Positions 389–403 (PGEPGLPGIPGPMGP) are enriched in pro residues. Residues 411–420 (GPKGEGGIVG) show a composition bias toward gly residues. 2 stretches are compositionally biased toward low complexity: residues 469–506 (LPGL…TGPS) and 540–556 (LHGP…QGQP). The span at 558–579 (LPGPPGPPGPPGPPAVMPPTPA) shows a compositional bias: pro residues. Residues 572 to 744 (AVMPPTPAPQ…SFSGYLLYPM (173 aa)) form a nonhelical region (NC1) region. In terms of domain architecture, C1q spans 611 to 744 (PAYEMPAFTA…SFSGYLLYPM (134 aa)).

As to quaternary structure, homotrimers, or heterotrimers in association with alpha 2(VIII) type collagens. Four homotrimers can form a tetrahedron stabilized by central interacting C-terminal NC1 trimers. Prolines at the third position of the tripeptide repeating unit (G-X-Y) are hydroxylated in some or all of the chains.

The protein localises to the secreted. The protein resides in the extracellular space. Its subcellular location is the extracellular matrix. It localises to the basement membrane. Functionally, macromolecular component of the subendothelium. Major component of the Descemet's membrane (basement membrane) of corneal endothelial cells. Also a component of the endothelia of blood vessels. Necessary for migration and proliferation of vascular smooth muscle cells and thus, has a potential role in the maintenance of vessel wall integrity and structure, in particular in atherogenesis. The chain is Collagen alpha-1(VIII) chain (COL8A1) from Gallus gallus (Chicken).